The following is a 426-amino-acid chain: Melibiose/raffinose/stachyose-binding protein MelE (426 aa).

A signal peptide spans Met-1 to Gly-18. Cys-19 carries the N-palmitoyl cysteine lipid modification. Cys-19 carries the S-diacylglycerol cysteine lipid modification.

The protein belongs to the bacterial solute-binding protein 1 family. The complex is composed of two ATP-binding proteins (MsmX), two transmembrane proteins (MelC and MelD) and a solute-binding protein (MelE).

The protein resides in the cell membrane. Its function is as follows. Part of the ABC transporter complex MelEDC-MsmX involved in melibiose, raffinose and stachyose import. Binds melibiose, raffinose and stachyose. This Bacillus subtilis (strain 168) protein is Melibiose/raffinose/stachyose-binding protein MelE.